The chain runs to 138 residues: MPTISQLINHGRSAKTSKSKAPALGMMFNSLQKKENKIPSPFKRGVCTRVATMTPKKPNSAIRKYARVRLSNGQEVTAYIPGEGHNLQEHSVVLIRGGKVKDLPGVRYTIVRGTQDAAGVDKRKQGRSIYGTKKPKEN.

The tract at residues 1 to 20 is disordered; the sequence is MPTISQLINHGRSAKTSKSK. Asp-102 is modified (3-methylthioaspartic acid). Residues 116–138 form a disordered region; it reads DAAGVDKRKQGRSIYGTKKPKEN.

This sequence belongs to the universal ribosomal protein uS12 family. Part of the 30S ribosomal subunit. Contacts proteins S8 and S17. May interact with IF1 in the 30S initiation complex.

In terms of biological role, with S4 and S5 plays an important role in translational accuracy. Interacts with and stabilizes bases of the 16S rRNA that are involved in tRNA selection in the A site and with the mRNA backbone. Located at the interface of the 30S and 50S subunits, it traverses the body of the 30S subunit contacting proteins on the other side and probably holding the rRNA structure together. The combined cluster of proteins S8, S12 and S17 appears to hold together the shoulder and platform of the 30S subunit. This is Small ribosomal subunit protein uS12 from Metamycoplasma arthritidis (strain 158L3-1) (Mycoplasma arthritidis).